The chain runs to 943 residues: Isoleucine--tRNA ligase (943 aa).

The 'HIGH' region signature appears at 59-69; the sequence is PYANGRIHLGH. Residue Glu577 participates in L-isoleucyl-5'-AMP binding. The short motif at 618–622 is the 'KMSKS' region element; the sequence is KMSKS. Lys621 lines the ATP pocket. Residues Cys906, Cys909, Cys926, and Cys929 each coordinate Zn(2+).

Belongs to the class-I aminoacyl-tRNA synthetase family. IleS type 1 subfamily. Monomer. Zn(2+) is required as a cofactor.

The protein resides in the cytoplasm. It catalyses the reaction tRNA(Ile) + L-isoleucine + ATP = L-isoleucyl-tRNA(Ile) + AMP + diphosphate. Functionally, catalyzes the attachment of isoleucine to tRNA(Ile). As IleRS can inadvertently accommodate and process structurally similar amino acids such as valine, to avoid such errors it has two additional distinct tRNA(Ile)-dependent editing activities. One activity is designated as 'pretransfer' editing and involves the hydrolysis of activated Val-AMP. The other activity is designated 'posttransfer' editing and involves deacylation of mischarged Val-tRNA(Ile). The chain is Isoleucine--tRNA ligase from Stenotrophomonas maltophilia (strain R551-3).